Here is a 302-residue protein sequence, read N- to C-terminus: UPF0761 membrane protein Tola_0461 (302 aa).

6 helical membrane passes run 51 to 71 (YVSLLSIVPLLAVVFSVLSWL), 111 to 131 (TTSIGLLMLVLLALLLIAAID), 150 to 170 (ITMYSIVLGVVPLLVGGSLLL), 188 to 208 (LGGGLLELLPYLLSLGGILLL), 222 to 242 (ALLGATLAALLFEVAKEGFGY), and 256 to 276 (ALAGIPILMIWLYMSWLVVLL).

Belongs to the UPF0761 family.

The protein resides in the cell inner membrane. This is UPF0761 membrane protein Tola_0461 from Tolumonas auensis (strain DSM 9187 / NBRC 110442 / TA 4).